Here is a 422-residue protein sequence, read N- to C-terminus: L-2-hydroxyglutarate dehydrogenase (422 aa).

This sequence belongs to the L2HGDH family. The cofactor is FAD.

It is found in the cell inner membrane. The catalysed reaction is (S)-2-hydroxyglutarate + a quinone = a quinol + 2-oxoglutarate. Its pathway is amino-acid degradation. In terms of biological role, catalyzes the dehydrogenation of L-2-hydroxyglutarate (L2HG) to alpha-ketoglutarate and couples to the respiratory chain by feeding electrons from the reaction into the membrane quinone pool. Functions in a L-lysine degradation pathway that proceeds via cadaverine, glutarate and L-2-hydroxyglutarate. Also displays some oxidase activity in vitro on L-2-hydroxyglutarate with O2 as the electron acceptor, but this activity is most likely not physiological. In Escherichia coli O17:K52:H18 (strain UMN026 / ExPEC), this protein is L-2-hydroxyglutarate dehydrogenase.